Here is a 317-residue protein sequence, read N- to C-terminus: Pantothenate kinase (317 aa).

Residue 95–102 participates in ATP binding; sequence GSVAVGKS.

This sequence belongs to the prokaryotic pantothenate kinase family.

The protein resides in the cytoplasm. The catalysed reaction is (R)-pantothenate + ATP = (R)-4'-phosphopantothenate + ADP + H(+). It functions in the pathway cofactor biosynthesis; coenzyme A biosynthesis; CoA from (R)-pantothenate: step 1/5. The chain is Pantothenate kinase from Rhodopseudomonas palustris (strain BisB18).